We begin with the raw amino-acid sequence, 706 residues long: uncharacterized protein (706 aa).

This is an uncharacterized protein from Rickettsia prowazekii (strain Madrid E).